Here is a 128-residue protein sequence, read N- to C-terminus: Small ribosomal subunit protein uS13 (128 aa).

The interval Pro97 to Val128 is disordered. The segment covering Gln101 to Val128 has biased composition (basic residues).

This sequence belongs to the universal ribosomal protein uS13 family. Part of the 30S ribosomal subunit. Forms a loose heterodimer with protein S19. Forms two bridges to the 50S subunit in the 70S ribosome.

In terms of biological role, located at the top of the head of the 30S subunit, it contacts several helices of the 16S rRNA. In the 70S ribosome it contacts the 23S rRNA (bridge B1a) and protein L5 of the 50S subunit (bridge B1b), connecting the 2 subunits; these bridges are implicated in subunit movement. Contacts the tRNAs in the A and P-sites. This is Small ribosomal subunit protein uS13 from Pseudothermotoga lettingae (strain ATCC BAA-301 / DSM 14385 / NBRC 107922 / TMO) (Thermotoga lettingae).